The following is a 379-amino-acid chain: MAAVTYELIKTCKQSGARLGKLHTPHGTIETPIFMPVGTLATVKTMSPEELKQLGAQIILSNTYHLWLRPGHDIVKEAGGLHEFMNWDRPILTDSGGFQVFSLSDLRTIEEEGVHFRNHLSGEKLFLSPEGAMEIQNALGSDIMMAFDECPPYPAERDYMRPSVERTSRWAERCLKAHKRPEDQALFGIIQGGEYEDLRRQSAQDITSLDFPGYAIGGVSVGEPKDVMNRVLEFTTPLLPANKPRYLMGVGSPDSLIDGAIRGIDMFDCVLPTRIARNGTCMTSNGRLVVRNAKYARDFRSLDENCDCHVCQTYTRAYIRHLVKCDETFGFRLTTYHNLYFLLKLMKDVRQAILDDRLLDFREEFFEQYGFNQPNAKNF.

Aspartate 94 serves as the catalytic Proton acceptor. Substrate-binding positions include aspartate 94–phenylalanine 98, aspartate 148, glutamine 191, and glycine 218. Positions glycine 249–serine 255 are RNA binding. The Nucleophile role is filled by aspartate 268. The interval threonine 273–arginine 277 is RNA binding; important for wobble base 34 recognition. Zn(2+)-binding residues include cysteine 306, cysteine 308, cysteine 311, and histidine 337.

This sequence belongs to the queuine tRNA-ribosyltransferase family. Homodimer. Within each dimer, one monomer is responsible for RNA recognition and catalysis, while the other monomer binds to the replacement base PreQ1. It depends on Zn(2+) as a cofactor.

It catalyses the reaction 7-aminomethyl-7-carbaguanine + guanosine(34) in tRNA = 7-aminomethyl-7-carbaguanosine(34) in tRNA + guanine. Its pathway is tRNA modification; tRNA-queuosine biosynthesis. Functionally, catalyzes the base-exchange of a guanine (G) residue with the queuine precursor 7-aminomethyl-7-deazaguanine (PreQ1) at position 34 (anticodon wobble position) in tRNAs with GU(N) anticodons (tRNA-Asp, -Asn, -His and -Tyr). Catalysis occurs through a double-displacement mechanism. The nucleophile active site attacks the C1' of nucleotide 34 to detach the guanine base from the RNA, forming a covalent enzyme-RNA intermediate. The proton acceptor active site deprotonates the incoming PreQ1, allowing a nucleophilic attack on the C1' of the ribose to form the product. After dissociation, two additional enzymatic reactions on the tRNA convert PreQ1 to queuine (Q), resulting in the hypermodified nucleoside queuosine (7-(((4,5-cis-dihydroxy-2-cyclopenten-1-yl)amino)methyl)-7-deazaguanosine). The protein is Queuine tRNA-ribosyltransferase of Halalkalibacterium halodurans (strain ATCC BAA-125 / DSM 18197 / FERM 7344 / JCM 9153 / C-125) (Bacillus halodurans).